The primary structure comprises 877 residues: DNA mismatch repair protein MutS (877 aa).

Gly627–Ser634 is an ATP binding site.

Belongs to the DNA mismatch repair MutS family.

Its function is as follows. This protein is involved in the repair of mismatches in DNA. It is possible that it carries out the mismatch recognition step. This protein has a weak ATPase activity. The protein is DNA mismatch repair protein MutS of Dinoroseobacter shibae (strain DSM 16493 / NCIMB 14021 / DFL 12).